The sequence spans 870 residues: Adhesin AWP1 (870 aa).

Positions 1-18 (MSLITIFAFFIKATLVLS) are cleaved as a signal peptide. A glycan (N-linked (GlcNAc...) asparagine) is linked at N224. The cysteines at positions 284 and 322 are disulfide-linked. Residues 329–835 (ITPSSSVEPS…TRQTSVIAPG (507 aa)) form a disordered region. A compositionally biased stretch (low complexity) spans 331 to 566 (PSSSVEPSSS…SSSAVVPTSS (236 aa)). Residues 567 to 576 (AGGGNGGDNG) show a composition bias toward gly residues. Over residues 577–641 (QPGADGQPGA…PGAAGQPGAA (65 aa)) the composition is skewed to low complexity. A compositionally biased stretch (gly residues) spans 642-652 (GQPGAGSGGGS). The N-linked (GlcNAc...) asparagine glycan is linked to N669. Over residues 675 to 721 (SGTGNGQAGSGQAGSGQVGSGQAGAGQAGSGQAGAGQAGSGQAGAGQ) the composition is skewed to gly residues. Polar residues-rich tracts occupy residues 724-735 (LDNTASGQSEGG) and 792-801 (GSGTDQSSGR).

The protein localises to the secreted. Its subcellular location is the cell wall. May play a role in cell adhesion. This is Adhesin AWP1 from Candida glabrata (strain ATCC 2001 / BCRC 20586 / JCM 3761 / NBRC 0622 / NRRL Y-65 / CBS 138) (Yeast).